A 1173-amino-acid polypeptide reads, in one-letter code: Paired amphipathic helix protein Sin3-like 6 (1173 aa).

The tract at residues 40 to 75 is disordered; sequence NQSAGESGRRLKMKRAREDVHTDTQKRKPEVSSRGE. Basic and acidic residues predominate over residues 55–75; that stretch reads AREDVHTDTQKRKPEVSSRGE. PAH domains lie at 79–148 and 162–232; these read LPRT…LPKG and IRVD…LPNC. Disordered regions lie at residues 236-337, 655-697, and 740-813; these read APST…TTKY, TASG…TAQP, and KHEL…ENNK. Basic and acidic residues-rich tracts occupy residues 264 to 276 and 301 to 319; these read CKLEDYSGHSDQR and RDYENREDTETDTADRTEK. Residues 320-337 show a composition bias toward polar residues; it reads SAASGSQDIGNHKSTTKY. The span at 750 to 765 shows a compositional bias: polar residues; that stretch reads PTASREQSNFEVNGQN. The span at 778 to 810 shows a compositional bias: basic and acidic residues; it reads RSNKDKQSCDKKGAKNKTRAEDDKQENCHKLSE.

Its subcellular location is the nucleus. Acts as a transcriptional repressor. Plays roles in regulating gene expression and genome stability. This is Paired amphipathic helix protein Sin3-like 6 (SNL6) from Arabidopsis thaliana (Mouse-ear cress).